The sequence spans 411 residues: Imidazolonepropionase (411 aa).

Fe(3+) is bound by residues H78 and H80. 2 residues coordinate Zn(2+): H78 and H80. Residues R87, Y150, and H183 each coordinate 4-imidazolone-5-propanoate. Position 150 (Y150) interacts with N-formimidoyl-L-glutamate. H248 serves as a coordination point for Fe(3+). Residue H248 coordinates Zn(2+). Q251 provides a ligand contact to 4-imidazolone-5-propanoate. D322 is a binding site for Fe(3+). D322 contacts Zn(2+). Residues N324 and G326 each coordinate N-formimidoyl-L-glutamate. 4-imidazolone-5-propanoate is bound at residue T327.

Belongs to the metallo-dependent hydrolases superfamily. HutI family. Requires Zn(2+) as cofactor. The cofactor is Fe(3+).

Its subcellular location is the cytoplasm. The catalysed reaction is 4-imidazolone-5-propanoate + H2O = N-formimidoyl-L-glutamate. Its pathway is amino-acid degradation; L-histidine degradation into L-glutamate; N-formimidoyl-L-glutamate from L-histidine: step 3/3. Catalyzes the hydrolytic cleavage of the carbon-nitrogen bond in imidazolone-5-propanoate to yield N-formimidoyl-L-glutamate. It is the third step in the universal histidine degradation pathway. The polypeptide is Imidazolonepropionase (Flavobacterium psychrophilum (strain ATCC 49511 / DSM 21280 / CIP 103535 / JIP02/86)).